A 109-amino-acid polypeptide reads, in one-letter code: Biphenyl dioxygenase system ferredoxin subunit (109 aa).

One can recognise a Rieske domain in the interval 4–100 (TRVCDRRDVP…IRIEDNDVLV (97 aa)). [2Fe-2S] cluster contacts are provided by C43, H45, C63, and H66.

Belongs to the bacterial ring-hydroxylating dioxygenase ferredoxin component family. As to quaternary structure, this dioxygenase system consists of four proteins: the two subunits of the hydroxylase component (BphA and BphE), a ferredoxin (BphF) and a ferredoxin reductase (BphG).

Functionally, this protein seems to be a 2Fe-2S ferredoxin. This chain is Biphenyl dioxygenase system ferredoxin subunit (bphF), found in Paraburkholderia xenovorans (strain LB400).